Here is a 317-residue protein sequence, read N- to C-terminus: MDFGASAKNLSTPVKGAKIVPNMTVDELVKEYAGCAFGAGRLAEAVDIYYEMLASGKTTKFFGLAGAMTPAGMRNIIADLIRDGYIDVLVTTGANMVHDTVEALGLHHYKGSDCANDIQLRHECIDRIYDVYLPDQHFTDLEEFLQGVYSGLPQENLSIRQVLTEIGKNLDDDSSILKTAAEMGVPVYCPALQDSVIGLQAWLYKEGNPLHVDAFADMHEFMDICYGAESAGTMLLGGGVPKNYILQSMLVTPRSFDYAIQLTMDRPETGGLSGATLDEAQSWGKVGEDAKSVTVYADSTITLPLIVSAVRTRLSKR.

The active-site Nucleophile is the Lys285.

This sequence belongs to the deoxyhypusine synthase family. Requires NAD(+) as cofactor.

The enzyme catalyses [eIF5A protein]-L-lysine + spermidine = [eIF5A protein]-deoxyhypusine + propane-1,3-diamine. It participates in protein modification; eIF5A hypusination. Catalyzes the NAD-dependent oxidative cleavage of spermidine and the subsequent transfer of the butylamine moiety of spermidine to the epsilon-amino group of a specific lysine residue of the eIF-5A precursor protein to form the intermediate deoxyhypusine residue. The protein is Probable deoxyhypusine synthase 1 (dys1) of Methanosarcina mazei (strain ATCC BAA-159 / DSM 3647 / Goe1 / Go1 / JCM 11833 / OCM 88) (Methanosarcina frisia).